Here is a 738-residue protein sequence, read N- to C-terminus: Putative cyclic nucleotide-gated ion channel 7 (738 aa).

Residues methionine 1–leucine 104 are Cytoplasmic-facing. The helical transmembrane segment at phenylalanine 105–valine 125 threads the bilayer. Topologically, residues aspartate 126 to leucine 139 are extracellular. The chain crosses the membrane as a helical span at residues alanine 140–leucine 160. The Cytoplasmic segment spans residues glutamine 161 to arginine 193. The helical transmembrane segment at tyrosine 194 to leucine 214 threads the bilayer. The Extracellular portion of the chain corresponds to histidine 215 to threonine 227. A helical transmembrane segment spans residues alanine 228–threonine 248. Residues serine 249–tyrosine 268 are Cytoplasmic-facing. Residues tyrosine 269–valine 289 form a helical membrane-spanning segment. Over glutamate 290–proline 395 the chain is Extracellular. Residues glycine 396–isoleucine 416 traverse the membrane as a helical segment. Residues glycine 417–glutamate 738 are Cytoplasmic-facing. A nucleoside 3',5'-cyclic phosphate contacts are provided by residues leucine 502–phenylalanine 632 and glutamate 573. The tract at residues phenylalanine 618–tyrosine 633 is calmodulin-binding. Residues arginine 638–glutamate 667 enclose the IQ domain. Disordered regions lie at residues glycine 671–serine 693 and leucine 715–glutamate 738.

This sequence belongs to the cyclic nucleotide-gated cation channel (TC 1.A.1.5) family. As to quaternary structure, homotetramer or heterotetramer.

It is found in the cell membrane. Functionally, putative cyclic nucleotide-gated ion channel. The sequence is that of Putative cyclic nucleotide-gated ion channel 7 (CNGC7) from Arabidopsis thaliana (Mouse-ear cress).